The following is a 272-amino-acid chain: 2-dehydro-3-deoxyphosphooctonate aldolase (272 aa).

It belongs to the KdsA family.

It localises to the cytoplasm. It catalyses the reaction D-arabinose 5-phosphate + phosphoenolpyruvate + H2O = 3-deoxy-alpha-D-manno-2-octulosonate-8-phosphate + phosphate. It participates in carbohydrate biosynthesis; 3-deoxy-D-manno-octulosonate biosynthesis; 3-deoxy-D-manno-octulosonate from D-ribulose 5-phosphate: step 2/3. The protein operates within bacterial outer membrane biogenesis; lipopolysaccharide biosynthesis. The chain is 2-dehydro-3-deoxyphosphooctonate aldolase from Geotalea daltonii (strain DSM 22248 / JCM 15807 / FRC-32) (Geobacter daltonii).